The sequence spans 142 residues: Holo-[acyl-carrier-protein] synthase (142 aa).

Mg(2+)-binding residues include D8 and E57.

The protein belongs to the P-Pant transferase superfamily. AcpS family. Requires Mg(2+) as cofactor.

The protein resides in the cytoplasm. The catalysed reaction is apo-[ACP] + CoA = holo-[ACP] + adenosine 3',5'-bisphosphate + H(+). In terms of biological role, transfers the 4'-phosphopantetheine moiety from coenzyme A to a Ser of acyl-carrier-protein. This Ruegeria sp. (strain TM1040) (Silicibacter sp.) protein is Holo-[acyl-carrier-protein] synthase.